The primary structure comprises 612 residues: Elongation factor 4 (612 aa).

Positions 11 to 193 constitute a tr-type G domain; sequence KHIRNFAIVA…KVVKDIPAPS (183 aa). GTP contacts are provided by residues 23-28 and 140-143; these read DHGKST and NKID.

The protein belongs to the TRAFAC class translation factor GTPase superfamily. Classic translation factor GTPase family. LepA subfamily.

The protein localises to the cell membrane. The catalysed reaction is GTP + H2O = GDP + phosphate + H(+). In terms of biological role, required for accurate and efficient protein synthesis under certain stress conditions. May act as a fidelity factor of the translation reaction, by catalyzing a one-codon backward translocation of tRNAs on improperly translocated ribosomes. Back-translocation proceeds from a post-translocation (POST) complex to a pre-translocation (PRE) complex, thus giving elongation factor G a second chance to translocate the tRNAs correctly. Binds to ribosomes in a GTP-dependent manner. In Lactobacillus helveticus (strain DPC 4571), this protein is Elongation factor 4.